We begin with the raw amino-acid sequence, 261 residues long: Glucose 1-dehydrogenase 2 (261 aa).

11-35 (VVTGGSKGLGRAMAVRFGQEQSKVV) lines the NADP(+) pocket. Residue S145 coordinates substrate. Y158 acts as the Proton acceptor in catalysis.

This sequence belongs to the short-chain dehydrogenases/reductases (SDR) family. As to quaternary structure, homotetramer.

It catalyses the reaction D-glucose + NAD(+) = D-glucono-1,5-lactone + NADH + H(+). The catalysed reaction is D-glucose + NADP(+) = D-glucono-1,5-lactone + NADPH + H(+). The protein is Glucose 1-dehydrogenase 2 (gdhII) of Priestia megaterium (Bacillus megaterium).